The following is a 283-amino-acid chain: uncharacterized protein (283 aa).

This is an uncharacterized protein from Acanthamoeba polyphaga mimivirus (APMV).